Consider the following 161-residue polypeptide: Protein translocase subunit SecE (161 aa).

Positions 1-12 (MSDEGDVADEAV) are enriched in acidic residues. The tract at residues 1 to 80 (MSDEGDVADE…GVAKDDSTTK (80 aa)) is disordered. The helical transmembrane segment at 133–153 (VVLAFLAFMVALVAGADLGLT) threads the bilayer.

The protein belongs to the SecE/SEC61-gamma family. In terms of assembly, component of the Sec protein translocase complex. Heterotrimer consisting of SecY, SecE and SecG subunits. The heterotrimers can form oligomers, although 1 heterotrimer is thought to be able to translocate proteins. Interacts with the ribosome. Interacts with SecDF, and other proteins may be involved. Interacts with SecA.

It is found in the cell membrane. In terms of biological role, essential subunit of the Sec protein translocation channel SecYEG. Clamps together the 2 halves of SecY. May contact the channel plug during translocation. The chain is Protein translocase subunit SecE from Mycobacterium bovis (strain ATCC BAA-935 / AF2122/97).